A 200-amino-acid polypeptide reads, in one-letter code: Endochitinase (200 aa).

Glu-58 (proton donor) is an active-site residue.

The protein belongs to the glycosyl hydrolase 19 family. Chitinase class I subfamily.

The catalysed reaction is Random endo-hydrolysis of N-acetyl-beta-D-glucosaminide (1-&gt;4)-beta-linkages in chitin and chitodextrins.. This protein functions as a defense against chitin-containing fungal pathogens. This chain is Endochitinase, found in Avena sativa (Oat).